The chain runs to 267 residues: MPRAIWKGWLAVGQVSCAVALHAAASTSDRVSFHTVNRKTGNRVRREFVDAVSGKPVPREDQVKGYEVAPDEFVQIDPDEIAATIPDSDKCLRIDAFVPCREVDGAYFDKPYYLTPAGDAALEAFALIREGMRARKAAALARTVLFRRLRTVMVRPHGAGLIAHTLNFDYEVRSSAEAFSEIPKLKVKGEMLELAKHIIGTKAGTFDPTAFDDRYDAALAELVKAKLEGRKPKRKAAPKKAREPSDLMAALRESVAATERPRRRKAG.

A Ku domain is found at 11–195 (AVGQVSCAVA…KVKGEMLELA (185 aa)). Residues 229–267 (GRKPKRKAAPKKAREPSDLMAALRESVAATERPRRRKAG) form a disordered region.

Belongs to the prokaryotic Ku family. Homodimer. Interacts with LigD.

Functionally, with LigD forms a non-homologous end joining (NHEJ) DNA repair enzyme, which repairs dsDNA breaks with reduced fidelity. Binds linear dsDNA with 5'- and 3'- overhangs but not closed circular dsDNA nor ssDNA. Recruits and stimulates the ligase activity of LigD. This chain is Non-homologous end joining protein Ku, found in Cereibacter sphaeroides (strain KD131 / KCTC 12085) (Rhodobacter sphaeroides).